A 333-amino-acid chain; its full sequence is Protoheme IX farnesyltransferase (333 aa).

Transmembrane regions (helical) follow at residues Leu63 to Ile83, Ala109 to Val129, Leu132 to Leu152, Ile160 to Gly180, Trp188 to Leu208, Gly245 to Phe265, and Trp292 to Ala312.

The protein belongs to the UbiA prenyltransferase family. Protoheme IX farnesyltransferase subfamily.

The protein resides in the cell inner membrane. It catalyses the reaction heme b + (2E,6E)-farnesyl diphosphate + H2O = Fe(II)-heme o + diphosphate. It participates in porphyrin-containing compound metabolism; heme O biosynthesis; heme O from protoheme: step 1/1. Functionally, converts heme B (protoheme IX) to heme O by substitution of the vinyl group on carbon 2 of heme B porphyrin ring with a hydroxyethyl farnesyl side group. The protein is Protoheme IX farnesyltransferase of Prochlorococcus marinus (strain MIT 9303).